A 127-amino-acid chain; its full sequence is Large ribosomal subunit protein bL17 (127 aa).

It belongs to the bacterial ribosomal protein bL17 family. As to quaternary structure, part of the 50S ribosomal subunit. Contacts protein L32.

The sequence is that of Large ribosomal subunit protein bL17 from Lactobacillus delbrueckii subsp. bulgaricus (strain ATCC 11842 / DSM 20081 / BCRC 10696 / JCM 1002 / NBRC 13953 / NCIMB 11778 / NCTC 12712 / WDCM 00102 / Lb 14).